A 202-amino-acid polypeptide reads, in one-letter code: dTTP/UTP pyrophosphatase (202 aa).

Aspartate 83 acts as the Proton acceptor in catalysis.

The protein belongs to the Maf family. YhdE subfamily. It depends on a divalent metal cation as a cofactor.

Its subcellular location is the cytoplasm. The catalysed reaction is dTTP + H2O = dTMP + diphosphate + H(+). It catalyses the reaction UTP + H2O = UMP + diphosphate + H(+). Its function is as follows. Nucleoside triphosphate pyrophosphatase that hydrolyzes dTTP and UTP. May have a dual role in cell division arrest and in preventing the incorporation of modified nucleotides into cellular nucleic acids. The protein is dTTP/UTP pyrophosphatase of Polaromonas sp. (strain JS666 / ATCC BAA-500).